Consider the following 1226-residue polypeptide: Methionine synthase (1226 aa).

Residues 6 to 326 (RQQLEQQLKQ…EHIAAIAKAV (321 aa)) form the Hcy-binding domain. Positions 248, 311, and 312 each coordinate Zn(2+). The 262-residue stretch at 357-618 (FVNVGERTNV…VPLKLREAVE (262 aa)) folds into the Pterin-binding domain. In terms of domain architecture, B12-binding N-terminal spans 651–745 (SALEWRAWPV…FINAQKSGST (95 aa)). Methylcob(III)alamin contacts are provided by residues glutamate 695, 757–761 (GDVHD), histidine 760, serine 805, threonine 809, and alanine 861. Residues 747–882 (NGKILLATVK…SDEQRPGFIE (136 aa)) form the B12-binding domain. The AdoMet activation domain maps to 898–1226 (KTPKSRPVTL…EKWLAPNLDA (329 aa)). S-adenosyl-L-methionine-binding positions include aspartate 948, arginine 1136, and 1191–1192 (YF).

It belongs to the vitamin-B12 dependent methionine synthase family. Methylcob(III)alamin serves as cofactor. The cofactor is Zn(2+).

The catalysed reaction is (6S)-5-methyl-5,6,7,8-tetrahydrofolate + L-homocysteine = (6S)-5,6,7,8-tetrahydrofolate + L-methionine. It functions in the pathway amino-acid biosynthesis; L-methionine biosynthesis via de novo pathway; L-methionine from L-homocysteine (MetH route): step 1/1. Functionally, catalyzes the transfer of a methyl group from methyl-cobalamin to homocysteine, yielding enzyme-bound cob(I)alamin and methionine. Subsequently, remethylates the cofactor using methyltetrahydrofolate. The chain is Methionine synthase (metH) from Vibrio cholerae serotype O1 (strain ATCC 39315 / El Tor Inaba N16961).